The primary structure comprises 853 residues: E3 ubiquitin-protein ligase RNF216 (853 aa).

Disordered stretches follow at residues 33 to 102 (TISD…DDIV), 125 to 152 (PLEVQNQSSEDSETELLSNPGEPAASVD), and 165 to 228 (PYFQ…AHPL). Residues 53 to 73 (QQEDDLDDDVILTEDDSEDEY) are compositionally biased toward acidic residues. A Glycyl lysine isopeptide (Lys-Gly) (interchain with G-Cter in SUMO2) cross-link involves residue lysine 89. Residues lysine 339 and lysine 342 each participate in a glycyl lysine isopeptide (Lys-Gly) (interchain with G-Cter in SUMO2) cross-link. Residue serine 407 is modified to Phosphoserine. Glycyl lysine isopeptide (Lys-Gly) (interchain with G-Cter in SUMO2) cross-links involve residues lysine 413, lysine 418, lysine 436, lysine 447, and lysine 473. A coiled-coil region spans residues 463–479 (VKQEQEFYEQKIKEMAE). Residues 499 to 716 (QLIECRCCYG…SPGAPCQECS (218 aa)) are TRIAD supradomain. Zn(2+) contacts are provided by cysteine 503, cysteine 506, cysteine 525, cysteine 528, cysteine 593, and cysteine 596. Residues 503 to 552 (CRCCYGEFPFEELTQCADAHLFCKECLIRYAQEAVFGSGKSELSCMEGSC) form an RING-type 1 zinc finger. An IBR-type zinc finger spans residues 571–636 (YKYYERKAEE…LWKEHNGLTC (66 aa)). Residue lysine 607 forms a Glycyl lysine isopeptide (Lys-Gly) (interchain with G-Cter in SUMO2) linkage. Residues cysteine 611, cysteine 616, cysteine 621, cysteine 624, histidine 631, and cysteine 636 each coordinate Zn(2+). Glycyl lysine isopeptide (Lys-Gly) (interchain with G-Cter in SUMO2) cross-links involve residues lysine 646 and lysine 654. Zn(2+) is bound by residues cysteine 663 and cysteine 666. The RING-type 2; atypical zinc-finger motif lies at 663-691 (CHKCGTGLIKSEGCNRMSCRCGAQMCYLC). Cysteine 676 is an active-site residue. Zn(2+)-binding residues include cysteine 681, cysteine 683, cysteine 688, cysteine 691, histidine 704, and cysteine 712. Residues 725–751 (TEDDEKLIEEIQKEAEEEQKRKNGENT) are a coiled coil. Glycyl lysine isopeptide (Lys-Gly) (interchain with G-Cter in SUMO2) cross-links involve residues lysine 753 and lysine 761.

Interacts with UBE2L3 and to some extent with UBE2L6. Interacts with TRAF3, TLR3, TLR4, TLR5 and TLR9. Isoform 3/ZIN binds RIPK1. Post-translationally, auto-ubiquitinated. In terms of processing, phosphorylation at Ser-719 enhances acceptor ubiquitin binding and chain-type specificity towards 'Lys-63' di-ubiquitin but not di-ubiquitin with other linkage types.

The protein localises to the cytoplasm. It is found in the cytoplasmic vesicle. It localises to the clathrin-coated vesicle. The enzyme catalyses S-ubiquitinyl-[E2 ubiquitin-conjugating enzyme]-L-cysteine + [acceptor protein]-L-lysine = [E2 ubiquitin-conjugating enzyme]-L-cysteine + N(6)-ubiquitinyl-[acceptor protein]-L-lysine.. Its pathway is protein modification; protein ubiquitination. Its activity is regulated as follows. Allosterically activated by 'Lys-63'-linked di-ubiquitin. In terms of biological role, E3 ubiquitin ligase which accepts ubiquitin from specific E2 ubiquitin-conjugating enzymes, and then transfers it to substrates promoting their ubiquitination. Plays a role in the regulation of antiviral responses by promoting the degradation of TRAF3, TLR4 and TLR9. In turn, down-regulates NF-kappa-B and IRF3 activation as well as beta interferon production. Also participates in the regulation of autophagy by ubiquitinating BECN1 leading to its degradation and autophagy inhibition. Plays a role in ARC-dependent synaptic plasticity by mediating ARC ubiquitination resulting in its rapid proteasomal degradation. Plays aso an essential role in spermatogenesis and male fertility. Mechanistically, regulates meiosis by promoting the degradation of PRKACB through the ubiquitin-mediated lysosome pathway. Modulates the gonadotropin-releasing hormone signal pathway by affecting the stability of STAU2 that is required for the microtubule-dependent transport of neuronal RNA from the cell body to the dendrite. The sequence is that of E3 ubiquitin-protein ligase RNF216 (Rnf216) from Mus musculus (Mouse).